The following is a 520-amino-acid chain: GMP synthase [glutamine-hydrolyzing] (520 aa).

In terms of domain architecture, Glutamine amidotransferase type-1 spans 9-202; that stretch reads TILIIDFGSQ…VHRIVGVKPG (194 aa). Catalysis depends on cysteine 86, which acts as the Nucleophile. Residues histidine 176 and glutamate 178 contribute to the active site. The 193-residue stretch at 203 to 395 folds into the GMPS ATP-PPase domain; that stretch reads WTMGAYREQA…LGLPDSFIGR (193 aa). An ATP-binding site is contributed by 230-236; sequence SGGVDSS.

In terms of assembly, homodimer.

It catalyses the reaction XMP + L-glutamine + ATP + H2O = GMP + L-glutamate + AMP + diphosphate + 2 H(+). The protein operates within purine metabolism; GMP biosynthesis; GMP from XMP (L-Gln route): step 1/1. Its function is as follows. Catalyzes the synthesis of GMP from XMP. The sequence is that of GMP synthase [glutamine-hydrolyzing] from Brucella ovis (strain ATCC 25840 / 63/290 / NCTC 10512).